The chain runs to 432 residues: Trigger factor (432 aa).

In terms of domain architecture, PPIase FKBP-type spans 161-246 (DDRVTIDFVG…LKKIENMVLP (86 aa)).

This sequence belongs to the FKBP-type PPIase family. Tig subfamily.

The protein localises to the cytoplasm. The catalysed reaction is [protein]-peptidylproline (omega=180) = [protein]-peptidylproline (omega=0). Involved in protein export. Acts as a chaperone by maintaining the newly synthesized protein in an open conformation. Functions as a peptidyl-prolyl cis-trans isomerase. The chain is Trigger factor from Haemophilus influenzae (strain 86-028NP).